A 166-amino-acid chain; its full sequence is Regulatory protein RecX (166 aa).

The protein belongs to the RecX family.

The protein resides in the cytoplasm. Functionally, modulates RecA activity. The polypeptide is Regulatory protein RecX (Salmonella choleraesuis (strain SC-B67)).